Here is a 206-residue protein sequence, read N- to C-terminus: Thiamine-phosphate synthase (206 aa).

4-amino-2-methyl-5-(diphosphooxymethyl)pyrimidine-binding positions include 38 to 42 (QLREK) and asparagine 70. Positions 71 and 90 each coordinate Mg(2+). Threonine 109 contacts 4-amino-2-methyl-5-(diphosphooxymethyl)pyrimidine. A 2-[(2R,5Z)-2-carboxy-4-methylthiazol-5(2H)-ylidene]ethyl phosphate-binding site is contributed by 135–137 (TST). Lysine 138 serves as a coordination point for 4-amino-2-methyl-5-(diphosphooxymethyl)pyrimidine. Residues glycine 165 and 185–186 (VS) contribute to the 2-[(2R,5Z)-2-carboxy-4-methylthiazol-5(2H)-ylidene]ethyl phosphate site.

The protein belongs to the thiamine-phosphate synthase family. Mg(2+) serves as cofactor.

It catalyses the reaction 2-[(2R,5Z)-2-carboxy-4-methylthiazol-5(2H)-ylidene]ethyl phosphate + 4-amino-2-methyl-5-(diphosphooxymethyl)pyrimidine + 2 H(+) = thiamine phosphate + CO2 + diphosphate. The catalysed reaction is 2-(2-carboxy-4-methylthiazol-5-yl)ethyl phosphate + 4-amino-2-methyl-5-(diphosphooxymethyl)pyrimidine + 2 H(+) = thiamine phosphate + CO2 + diphosphate. It carries out the reaction 4-methyl-5-(2-phosphooxyethyl)-thiazole + 4-amino-2-methyl-5-(diphosphooxymethyl)pyrimidine + H(+) = thiamine phosphate + diphosphate. Its pathway is cofactor biosynthesis; thiamine diphosphate biosynthesis; thiamine phosphate from 4-amino-2-methyl-5-diphosphomethylpyrimidine and 4-methyl-5-(2-phosphoethyl)-thiazole: step 1/1. Functionally, condenses 4-methyl-5-(beta-hydroxyethyl)thiazole monophosphate (THZ-P) and 2-methyl-4-amino-5-hydroxymethyl pyrimidine pyrophosphate (HMP-PP) to form thiamine monophosphate (TMP). This is Thiamine-phosphate synthase from Fusobacterium nucleatum subsp. nucleatum (strain ATCC 25586 / DSM 15643 / BCRC 10681 / CIP 101130 / JCM 8532 / KCTC 2640 / LMG 13131 / VPI 4355).